Reading from the N-terminus, the 318-residue chain is tRNA dimethylallyltransferase (318 aa).

21 to 28 (GPTATGKS) lines the ATP pocket. Position 23 to 28 (23 to 28 (TATGKS)) interacts with substrate. Residues 46–49 (DSMQ) are interaction with substrate tRNA.

It belongs to the IPP transferase family. In terms of assembly, monomer. Requires Mg(2+) as cofactor.

The catalysed reaction is adenosine(37) in tRNA + dimethylallyl diphosphate = N(6)-dimethylallyladenosine(37) in tRNA + diphosphate. Catalyzes the transfer of a dimethylallyl group onto the adenine at position 37 in tRNAs that read codons beginning with uridine, leading to the formation of N6-(dimethylallyl)adenosine (i(6)A). The sequence is that of tRNA dimethylallyltransferase from Acidothermus cellulolyticus (strain ATCC 43068 / DSM 8971 / 11B).